The chain runs to 945 residues: Kinesin-like protein KIN-7F (945 aa).

A Kinesin motor domain is found at 34–356; it reads RILVSVRLRP…LLFASCAKEV (323 aa). 120–127 is an ATP binding site; the sequence is GQTSSGKT. Residues 365–437 adopt a coiled-coil conformation; the sequence is VMSDKALVKQ…QDLLQVVGDN (73 aa). 2 disordered regions span residues 484-512 and 553-588; these read RRVAQREHKPQQAENNVQFTTPSRYSVSS and NECLESSAVGSNSLQDPNAGSSMHINNDSNSSMNSR. Polar residues-rich tracts occupy residues 495-512 and 560-587; these read QAENNVQFTTPSRYSVSS and AVGSNSLQDPNAGSSMHINNDSNSSMNS.

It belongs to the TRAFAC class myosin-kinesin ATPase superfamily. Kinesin family. KIN-7 subfamily. As to quaternary structure, binds microtubules.

Its function is as follows. Binds ATP/ADP in vitro. Possesses low ATPase activity but high affinity for microtubules. In Oryza sativa subsp. japonica (Rice), this protein is Kinesin-like protein KIN-7F.